Here is a 165-residue protein sequence, read N- to C-terminus: MSHPALTQLRALRYFKEIPALDSQLLDWLLLEDSMTKRFEQQGKTVSVTMIREGFVEQNEIPEELPLLPKESRYWLREILLCADGEPWLAGRTVVPVSTLSGPELALQKLGKTPLGRYLFTSSTLTRDFIEIGRDAGLWGRRSRLRLSGKPLLLTELFLPASPLY.

Substrate-binding residues include M35, R77, L115, and E156.

This sequence belongs to the UbiC family. Monomer.

It localises to the cytoplasm. The enzyme catalyses chorismate = 4-hydroxybenzoate + pyruvate. The protein operates within cofactor biosynthesis; ubiquinone biosynthesis. Removes the pyruvyl group from chorismate, with concomitant aromatization of the ring, to provide 4-hydroxybenzoate (4HB) for the ubiquinone pathway. The chain is Chorismate pyruvate-lyase from Shigella sonnei (strain Ss046).